A 992-amino-acid polypeptide reads, in one-letter code: Tubulin glycylase 3A (992 aa).

Disordered stretches follow at residues 1-54 (MQTR…NRVV) and 68-113 (QSDS…LGAP). The segment covering 7 to 26 (SEPHRSRDQVTDGDRNRDQP) has biased composition (basic and acidic residues). Positions 39 to 49 (VTPPAAPPPTP) are enriched in pro residues. A TTL domain is found at 295-645 (FKLTACVAFL…RRTDPKAELG (351 aa)). Residues 457 to 460 (QKYI), K470, and D472 each bind ATP. 2 disordered regions span residues 746–766 (SLCS…TATP) and 791–828 (KRNT…PVES). Residues 794–807 (TGGSLSGEQVQSTA) show a composition bias toward polar residues.

It is found in the cytoplasm. Its subcellular location is the cytoskeleton. Its function is as follows. Polylycylase which modifies alpha- and beta-tubulin, generating side chains of glycine on the gamma-carboxyl groups of specific glutamate residues within the C-terminal tail of alpha- and beta-tubulin. Involved both in the side-chain initiation and elongation steps of the polyglycylation reaction by adding a single glycine chain to generate monoglycine side chains and by elongating monoglycine side chains to polyglycine side chains. This is Tubulin glycylase 3A (TTLL3A) from Drosophila melanogaster (Fruit fly).